The primary structure comprises 271 residues: Ribosomal RNA small subunit methyltransferase I (271 aa).

Belongs to the methyltransferase superfamily. RsmI family.

Its subcellular location is the cytoplasm. The catalysed reaction is cytidine(1402) in 16S rRNA + S-adenosyl-L-methionine = 2'-O-methylcytidine(1402) in 16S rRNA + S-adenosyl-L-homocysteine + H(+). In terms of biological role, catalyzes the 2'-O-methylation of the ribose of cytidine 1402 (C1402) in 16S rRNA. This is Ribosomal RNA small subunit methyltransferase I from Campylobacter fetus subsp. fetus (strain 82-40).